A 359-amino-acid chain; its full sequence is Membrane-bound lytic murein transglycosylase C (359 aa).

The first 16 residues, 1-16 (MKKYLALALIAPLLIS), serve as a signal peptide directing secretion. The N-palmitoyl cysteine moiety is linked to residue C17. C17 carries S-diacylglycerol cysteine lipidation.

This sequence belongs to the transglycosylase Slt family.

The protein localises to the cell outer membrane. The enzyme catalyses Exolytic cleavage of the (1-&gt;4)-beta-glycosidic linkage between N-acetylmuramic acid (MurNAc) and N-acetylglucosamine (GlcNAc) residues in peptidoglycan, from either the reducing or the non-reducing ends of the peptidoglycan chains, with concomitant formation of a 1,6-anhydrobond in the MurNAc residue.. Functionally, murein-degrading enzyme. May play a role in recycling of muropeptides during cell elongation and/or cell division. This Shigella flexneri serotype 5b (strain 8401) protein is Membrane-bound lytic murein transglycosylase C.